A 312-amino-acid polypeptide reads, in one-letter code: Ankyrin repeat family A protein 2 (312 aa).

5 ANK repeats span residues 147–179 (ANSLSAHQLAAQGEMLYLATRIEQENVINHTDE), 180–212 (EGFTPLMWAAAHGQIAVVEFLLQNGADPQLLGK), 213–245 (GRESALSLACSKGYTDIVKMLLDCGVDVNEYDW), 246–278 (NGGTPLLYAVHGNHVKCVKMLLENGADPTIETD), and 279–312 (SGYNSMDLAVALGYRGVQQAIESHLLKLLQNIRE).

In terms of assembly, interacts (via ANK repeats) with CCDC8 (via PxLPxI/L motif); mediates the interaction with the 3M complex which is composed of CCDC8, CUL7 and OBSL1. Interacts (via ANK repeats) with HDAC4 (via PxLPxI/L motif). Interacts (via ANK repeats) with HDAC5 (via PxLPxI/L motif). Interacts (via ANK repeats) with LRP2/megalin (via PxLPxI/L motif). Interacts (via ANK repeats) with RFX7 (via PxLPxI/L motif). Interacts with AHRR. Interacts with NEK6.

The protein localises to the cytoplasm. It is found in the cytoskeleton. It localises to the membrane. Functionally, may regulate the interaction between the 3M complex and the histone deacetylases HDAC4 and HDAC5. May also regulate LRP2/megalin. The protein is Ankyrin repeat family A protein 2 (Ankra2) of Mus musculus (Mouse).